The primary structure comprises 870 residues: Elastin (870 aa).

A signal peptide spans 1–27 (MAGLTAAVPQPGVLLILLLNLLHPAQP). 4-hydroxyproline is present on residues P39 and P75. P87 is subject to Hydroxyproline. P105 is subject to 4-hydroxyproline. Residues K122 and K126 each carry the allysine modification. A 4-hydroxyproline mark is found at P207, P220, P223, and P244. 2 positions are modified to allysine: K290 and K309. P338 carries the 4-hydroxyproline modification. 2 positions are modified to allysine: K360 and K363. Residue P375 is modified to Hydroxyproline. A 4-hydroxyproline mark is found at P402 and P408. Hydroxyproline is present on residues P413 and P418. An allysine mark is found at K434, K438, K441, K485, and K488. A 4-hydroxyproline mark is found at P518 and P539. K554, K558, K615, K619, and K623 each carry allysine. P637, P646, P662, and P670 each carry 4-hydroxyproline. Residues K677 and K680 each carry the allysine modification. Residue P715 is modified to 4-hydroxyproline. Allysine occurs at positions 730, 734, 793, and 796. Position 842 is a 4-hydroxyproline (P842). A disulfide bridge connects residues C860 and C865.

Belongs to the elastin family. The polymeric elastin chains are cross-linked together into an extensible 3D network. Forms a ternary complex with BGN and MFAP2. Interacts with MFAP2 via divalent cations (calcium &gt; magnesium &gt; manganese) in a dose-dependent and saturating manner. Interacts with FBLN5 and FBN1. Forms a ternary complex with FBN1 and FBLN2 or FBLN5. Interacts with MFAP4 in a Ca (2+)-dependent manner; this interaction promotes ELN self-assembly. Interacts with EFEMP2 with moderate affinity. Elastin is formed through the cross-linking of its soluble precursor tropoelastin. Cross-linking is initiated through the action of lysyl oxidase on exposed lysines to form allysine. Subsequent spontaneous condensation reactions with other allysine or unmodified lysine residues result in various bi-, tri-, and tetrafunctional cross-links. The most abundant cross-links in mature elastin fibers are lysinonorleucine, allysine aldol, desmosine, and isodesmosine. In terms of processing, hydroxylation on proline residues within the sequence motif, GXPG, is most likely to be 4-hydroxy as this fits the requirement for 4-hydroxylation in vertebrates.

The protein localises to the secreted. The protein resides in the extracellular space. It localises to the extracellular matrix. Functionally, major structural protein of tissues such as aorta and nuchal ligament, which must expand rapidly and recover completely. Molecular determinant of the late arterial morphogenesis, stabilizing arterial structure by regulating proliferation and organization of vascular smooth muscle. The polypeptide is Elastin (Eln) (Rattus norvegicus (Rat)).